Consider the following 699-residue polypeptide: SPS-sensor serine protease component SSY5 (699 aa).

2 disordered regions span residues 1–113 (MVRF…LQGF) and 129–158 (VKEEESQDTQNTLDVSSSTSSTLATSGNAR). Positions 1–381 (MVRFFGLNKK…YCVKDYIKKA (381 aa)) are excised as a propeptide. The span at 24–38 (NEQNAAETSSSNVSG) shows a compositional bias: polar residues. A compositionally biased stretch (basic and acidic residues) spans 39–51 (NEERIDPNSHDAN). Residues 52–78 (PENANNDDASTTFGSSIQSSSIFSRGR) are compositionally biased toward low complexity. Positions 83–93 (TGASSSMATSE) are enriched in polar residues. 2 stretches are compositionally biased toward low complexity: residues 97–109 (HSSGHSGSKNSKN) and 144–154 (SSSTSSTLATS). A serine protease region spans residues 459 to 699 (FAITCAHVVL…QWDIDPQLDG (241 aa)). Active-site charge relay system residues include His-465, Asp-545, and Ser-640.

It belongs to the peptidase S64 family. In terms of assembly, component of the plasma membrane SPS (SSY1-PTR3-SSY5) amino acid sensor complex. Post-translationally, the propeptide is autoproteolytically cleaved from the catalytic domain but remains associated, forming an inactive protease complex. This processing occurs even in the absence of signaling.

The protein localises to the cell membrane. In terms of biological role, protease component of the SPS-sensor system, which regulates the expression of several amino acid-metabolizing enzymes and amino acid- and peptide-permeases in response to extracellular amino acid levels by controlling the activity of two transcription factors, STP1 and STP2. Catalyzes the activation of these transcription factors, which are synthesized as latent cytoplasmic precursors, by proteolytic removal of an N-terminal inhibitory domain containing cytoplasmic retention motifs. SSY5 binds as an inactive protease complex to STP1. In response to extracellular amino acids and dependent on the other SPS-sensor components, the inhibitory propeptide is induced to dissociate, and thereby enables the catalytic domain to process STP1. The chain is SPS-sensor serine protease component SSY5 (SSY5) from Saccharomyces cerevisiae (strain YJM789) (Baker's yeast).